A 617-amino-acid polypeptide reads, in one-letter code: Phosphomethylpyrimidine synthase (617 aa).

Substrate-binding positions include N230, M259, Y288, H324, 344 to 346 (SRG), 385 to 388 (DGLR), and E424. H428 is a binding site for Zn(2+). A substrate-binding site is contributed by Y451. H492 provides a ligand contact to Zn(2+). Residues C572, C575, and C580 each contribute to the [4Fe-4S] cluster site.

Belongs to the ThiC family. In terms of assembly, homodimer. The cofactor is [4Fe-4S] cluster.

The enzyme catalyses 5-amino-1-(5-phospho-beta-D-ribosyl)imidazole + S-adenosyl-L-methionine = 4-amino-2-methyl-5-(phosphooxymethyl)pyrimidine + CO + 5'-deoxyadenosine + formate + L-methionine + 3 H(+). It functions in the pathway cofactor biosynthesis; thiamine diphosphate biosynthesis. In terms of biological role, catalyzes the synthesis of the hydroxymethylpyrimidine phosphate (HMP-P) moiety of thiamine from aminoimidazole ribotide (AIR) in a radical S-adenosyl-L-methionine (SAM)-dependent reaction. This is Phosphomethylpyrimidine synthase from Paracidovorax citrulli (strain AAC00-1) (Acidovorax citrulli).